The chain runs to 433 residues: 23S rRNA (uracil(1939)-C(5))-methyltransferase RlmD (433 aa).

Residues 1 to 53 (MPTAVIESLDHEGRGIARVEGKAVFIEGGLPGETVEYRVLRSKPNYEQAEATR) enclose the TRAM domain. [4Fe-4S] cluster is bound by residues Cys-66, Cys-72, Cys-75, and Cys-154. S-adenosyl-L-methionine-binding residues include Gln-263, Phe-292, Asn-297, Glu-313, Asn-341, and Asp-362. The Nucleophile role is filled by Cys-389.

Belongs to the class I-like SAM-binding methyltransferase superfamily. RNA M5U methyltransferase family. RlmD subfamily.

It catalyses the reaction uridine(1939) in 23S rRNA + S-adenosyl-L-methionine = 5-methyluridine(1939) in 23S rRNA + S-adenosyl-L-homocysteine + H(+). Functionally, catalyzes the formation of 5-methyl-uridine at position 1939 (m5U1939) in 23S rRNA. This Azoarcus sp. (strain BH72) protein is 23S rRNA (uracil(1939)-C(5))-methyltransferase RlmD.